A 164-amino-acid polypeptide reads, in one-letter code: Small ribosomal subunit protein uS5 (164 aa).

One can recognise an S5 DRBM domain in the interval 10–73 (LEERVVAVNR…DDAKKNLIEV (64 aa)).

This sequence belongs to the universal ribosomal protein uS5 family. As to quaternary structure, part of the 30S ribosomal subunit. Contacts proteins S4 and S8.

In terms of biological role, with S4 and S12 plays an important role in translational accuracy. Its function is as follows. Located at the back of the 30S subunit body where it stabilizes the conformation of the head with respect to the body. This is Small ribosomal subunit protein uS5 from Streptococcus pneumoniae serotype 2 (strain D39 / NCTC 7466).